Reading from the N-terminus, the 156-residue chain is Small ribosomal subunit protein uS7c (156 aa).

It belongs to the universal ribosomal protein uS7 family. In terms of assembly, part of the 30S ribosomal subunit.

Its subcellular location is the plastid. It is found in the chloroplast. Functionally, one of the primary rRNA binding proteins, it binds directly to 16S rRNA where it nucleates assembly of the head domain of the 30S subunit. This Tupiella akineta (Green alga) protein is Small ribosomal subunit protein uS7c (rps7).